We begin with the raw amino-acid sequence, 324 residues long: Pyruvate synthase subunit PorB (324 aa).

Residues cysteine 26, cysteine 29, and cysteine 57 each contribute to the [4Fe-4S] cluster site. The disordered stretch occupies residues threonine 150–lysine 172. Residues serine 155–threonine 166 show a composition bias toward low complexity. [4Fe-4S] cluster is bound at residue cysteine 228.

Heterotetramer of one alpha, one beta, one delta and one gamma chain. [4Fe-4S] cluster is required as a cofactor.

It carries out the reaction 2 oxidized [2Fe-2S]-[ferredoxin] + pyruvate + CoA = 2 reduced [2Fe-2S]-[ferredoxin] + acetyl-CoA + CO2 + H(+). The protein is Pyruvate synthase subunit PorB (porB) of Thermotoga maritima (strain ATCC 43589 / DSM 3109 / JCM 10099 / NBRC 100826 / MSB8).